An 86-amino-acid chain; its full sequence is Large ribosomal subunit protein bL27 (86 aa).

The segment covering 1–10 (MAQKKGGGST) has biased composition (gly residues). The interval 1-21 (MAQKKGGGSTRNGRDSESKRL) is disordered.

Belongs to the bacterial ribosomal protein bL27 family.

This is Large ribosomal subunit protein bL27 from Ralstonia pickettii (strain 12J).